The following is a 184-amino-acid chain: MNRESDWLWVEPIMGSRRVSNFCWAAILLFGALGFFFVGISSYFGKDLIPFLSSQQILFVPQGVVMCFYGIAGLFLSFYLWCTIFWNVGSGYNKFDKKKKIVSLFRWGFPGENRRICINFFMKDIQGIRMEVQEGIYPRRTLYMKIKGQQDIPLTRIRENLTLGEIEEKAAELARFLRVSIEGL.

The next 2 helical transmembrane spans lie at 21 to 43 and 68 to 90; these read NFCW…ISSY and FYGI…NVGS.

It belongs to the Ycf4 family.

It localises to the plastid. The protein resides in the chloroplast thylakoid membrane. Functionally, seems to be required for the assembly of the photosystem I complex. The polypeptide is Photosystem I assembly protein Ycf4 (Physcomitrium patens (Spreading-leaved earth moss)).